The following is a 146-amino-acid chain: SecB-like chaperone SmegB (146 aa).

Belongs to the SecB-like family.

Chaperone component of an orphan antitoxin chaperone (AC) system; there is no toxin gene in close genomic proximity. When expressed in E.coli complements the cold-sensitive phenotype of a secB deletion, suggesting it may have a generic chaperone function. Does not however complement the toxin-neutralizing effect of its M.tuberculosis paralog Rv1957 (AC P95257) in E.coli, probably because the antitoxin genes are not from the same family. The polypeptide is SecB-like chaperone SmegB (Mycolicibacterium smegmatis (strain ATCC 700084 / mc(2)155) (Mycobacterium smegmatis)).